A 627-amino-acid polypeptide reads, in one-letter code: Pescadillo homolog (627 aa).

Positions 321 to 414 (RLRTLFKGLK…QLLPTNKYFI (94 aa)) constitute a BRCT domain. Disordered regions lie at residues 450 to 469 (HAQS…ETVD), 488 to 566 (YKKY…MVKP), and 595 to 627 (TIEA…KLGK). Phosphoserine occurs at positions 453 and 457. Acidic residues-rich tracts occupy residues 454 to 469 (DDDS…ETVD) and 497 to 521 (VNED…EELD). A compositionally biased stretch (basic and acidic residues) spans 522–533 (EKTKRLQEEKQK). Over residues 540-549 (KVHKVNKRQV) the composition is skewed to basic residues. 2 stretches are compositionally biased toward basic and acidic residues: residues 550–559 (HKAEVDEHRL) and 595–615 (TIEA…RKEA). The stretch at 582 to 625 (KEKEEWLLRKKRRTIEASEKEARKTAKREARKEAAAAAAKASKL) forms a coiled coil. Positions 616-627 (AAAAAKASKLGK) are enriched in low complexity.

Belongs to the pescadillo family.

The protein resides in the nucleus. It is found in the nucleolus. The protein localises to the nucleoplasm. Its function is as follows. Required for maturation of ribosomal RNAs and formation of the large ribosomal subunit. In Drosophila simulans (Fruit fly), this protein is Pescadillo homolog.